A 204-amino-acid chain; its full sequence is MSNNKTKYLVITTFFMAIILLQVLIPWLGYIPLGAVIVGAQPTIIQFTVAIAAILLGARRGAFIGGFWGLLTLWQAWSTPGSIGSLMFQNPFTAFIPRILVGLIIGMAFNKWLRNKNFGFRTLGLGFLGGLAALINTVGVVLLTVIGFTVMRTNFTGIPNHNLLGWLIGIVSFNSIFEIITGIILVAAIGNVLVPIAERAGIKG.

6 consecutive transmembrane segments (helical) span residues 18 to 38 (IILLQVLIPWLGYIPLGAVIV), 39 to 59 (GAQPTIIQFTVAIAAILLGAR), 63 to 83 (FIGGFWGLLTLWQAWSTPGSI), 86 to 106 (LMFQNPFTAFIPRILVGLIIG), 123 to 143 (LGLGFLGGLAALINTVGVVLL), and 176 to 196 (IFEIITGIILVAAIGNVLVPI).

As to quaternary structure, in E.coli forms a stable energy-coupling factor (ECF) transporter complex probably composed of a membrane-embedded substrate-binding protein (S component), two ATP-binding proteins (A components) and a transmembrane protein (T component).

The protein resides in the cell membrane. Functionally, probable pantothenate-binding protein that interacts with the energy-coupling factor (ECF) ABC-transporter complex. Unlike classic ABC transporters this ECF transporter provides the energy necessary to transport a number of different substrates. The substrates themselves are bound by transmembrane, not extracytoplasmic soluble proteins and transport it into cells. Upon coexpression with its energy-coupling factor (ECF) ABC-transporter complex EcfA1A2T in E.coli allows pantothenate uptake; uptake requires both PanT and EcfA1A2T. In Leuconostoc mesenteroides subsp. mesenteroides (strain ATCC 8293 / DSM 20343 / BCRC 11652 / CCM 1803 / JCM 6124 / NCDO 523 / NBRC 100496 / NCIMB 8023 / NCTC 12954 / NRRL B-1118 / 37Y), this protein is Pantothenate transporter PanT (panT).